Here is a 295-residue protein sequence, read N- to C-terminus: Caffeine dehydrogenase subunit beta (295 aa).

Positions 1–178 (MKPTAFDYIR…CEIRIPVPSQ (178 aa)) constitute an FAD-binding PCMH-type domain. FAD contacts are provided by residues 32–36 (AGGQS) and 111–115 (TLGGN).

In terms of assembly, heterotrimer composed of an alpha (CdhA), a beta (CdhB) and a gamma (CdhC) subunit.

It carries out the reaction caffeine + a ubiquinone + H2O = 1,3,7-trimethylurate + a ubiquinol. It catalyses the reaction ubiquinone-0 + caffeine + H2O = ubiquinol-0 + 1,3,7-trimethylurate. The enzyme catalyses theobromine + a ubiquinone + H2O = 3,7-dimethylurate + a ubiquinol. In terms of biological role, component of the caffeine dehydrogenase complex that catalyzes the hydrolytical oxidation of 1,3,7-trimethylxanthine (caffeine) by incorporation of an oxygen atom originating from a water molecule into position C-8 to produce 1,3,7-trimethyluric acid (TMU). Coenzyme Q0 (ubiquinone-0) is the preferred electron acceptor and, to a lesser extent, coenzyme Q2 (ubiquinone-2) can also be used, but oxygen and NAD(P)(+) cannot. Is involved in a caffeine degradation pathway that allows Pseudomonas sp. strain CBB1 to grow on caffeine as the sole carbon and nitrogen source. Is also active with theobromine as substrate, but shows a very poor activity with theophylline and is not active with xanthine, 3-methylxanthine, 7-methylxanthine, TMU, and 3,7-dimethylurate. The polypeptide is Caffeine dehydrogenase subunit beta (Pseudomonas sp. (strain CBB1)).